Consider the following 301-residue polypeptide: uncharacterized protein (301 aa).

Transmembrane regions (helical) follow at residues 1 to 21 (MSWI…LRII), 33 to 53 (SVLF…YVYY), 72 to 92 (AMSL…KIPW), 101 to 121 (FGII…IILI), 124 to 144 (FAWL…KTFY), 194 to 214 (VLIE…IFAI), 220 to 240 (IIYT…FCLA), 253 to 273 (LALI…IAIP), and 274 to 294 (EYVA…ASII).

It belongs to the TerC family.

It localises to the cell membrane. This is an uncharacterized protein from Rickettsia conorii (strain ATCC VR-613 / Malish 7).